Here is a 2849-residue protein sequence, read N- to C-terminus: Polycystin-1-like protein 1 (2849 aa).

The Extracellular segment spans residues 1 to 1748 (MAEEAAQNIS…SDISKLQSHP (1748 aa)). N-linked (GlcNAc...) asparagine glycans are attached at residues Asn-8, Asn-295, Asn-338, Asn-376, Asn-447, Asn-482, Asn-514, Asn-605, Asn-657, Asn-751, Asn-875, Asn-926, and Asn-937. 2 consecutive PKD domains span residues 508–590 (SVSV…VQKK) and 592–673 (VANR…VCEP). The region spanning 674 to 1571 (CQPPLVKNMG…GEEDGLDNRR (898 aa)) is the REJ domain. The segment covering 970 to 987 (NLLPTEPGTADPDATTTP) has biased composition (low complexity). Disordered regions lie at residues 970 to 1068 (NLLP…PHLS) and 1081 to 1118 (IPSG…DPSL). Residues 1053 to 1068 (RSERSQPTHSPDPHLS) show a composition bias toward basic and acidic residues. Asn-1233, Asn-1301, Asn-1306, Asn-1572, Asn-1681, and Asn-1716 each carry an N-linked (GlcNAc...) asparagine glycan. The GAIN-B domain maps to 1587–1735 (QFTELSENPQ…ALLRRKLKAS (149 aa)). A disulfide bridge connects residues Cys-1691 and Cys-1717. The segment at 1691-1735 (CLFWDKREWKSERFSPQPGTSPEKVNCSYHRLAAFALLRRKLKAS) is GPS. The chain crosses the membrane as a helical span at residues 1749–1769 (ENLLPSIFIMGSVILYGFLVA). At 1770–1956 (KSRQVDHHEK…SSSRYLHTPR (187 aa)) the chain is on the cytoplasmic side. In terms of domain architecture, PLAT spans 1796–1913 (QLYAVVIDTG…HDGRVERELT (118 aa)). The helical transmembrane segment at 1957-1977 (LTVSFSLLCVYACLTALVAAG) threads the bilayer. The Extracellular portion of the chain corresponds to 1978-1992 (GQEQPHLDVSPTLGS). The chain crosses the membrane as a helical span at residues 1993–2013 (FRVGLLCTLLASPGAQLLSLL). The Cytoplasmic portion of the chain corresponds to 2014–2135 (FRLSKEAPGS…SRALQPWWSS (122 aa)). The segment at 2023-2089 (SARVEPHSPL…GTACPAPKLQ (67 aa)) is disordered. Residues 2136-2156 (AVWAICGTASLACSLGTGFLA) traverse the membrane as a helical segment. Residues 2157 to 2174 (YRFGQEQCVQWLHLLSLS) are Extracellular-facing. The helical transmembrane segment at 2175–2195 (VVCCIFITQPLMVCLMALGFA) threads the bilayer. At 2196 to 2281 (WKRRADNHFF…QRMRRESRTR (86 aa)) the chain is on the cytoplasmic side. Residues 2282-2302 (AALRDISMDILMLLLLLCVIY) traverse the membrane as a helical segment. Residues 2303–2522 (GRFSQDEYSL…FRSDSALQYH (220 aa)) lie on the Extracellular side of the membrane. The N-linked (GlcNAc...) asparagine glycan is linked to Asn-2426. Residues 2523 to 2543 (LMLPQLVFLALSLIHLCVQLY) form a helical membrane-spanning segment. Over 2544 to 2562 (RMMDKGVLSYWRKPRNWLE) the chain is Cytoplasmic. A helical transmembrane segment spans residues 2563 to 2583 (LSVVGVSLTYYAVSGHLVTLA). Topologically, residues 2584-2616 (GDVTNQFHRGLCRAFMDLTLMASWNQRARWLRG) are extracellular. A helical membrane pass occupies residues 2617 to 2637 (ILLFLFTLKCVYLPGIQNTMA). Topologically, residues 2638 to 2646 (SCSSMMRHS) are cytoplasmic. A helical membrane pass occupies residues 2647 to 2667 (LPSIFVAGLVGALMLAALSHL). The Extracellular portion of the chain corresponds to 2668–2711 (HRFLLSMWVLPPGTFTDAFPGLLFHFPRRSQKDCLLGLSKSDQR). The chain crosses the membrane as a helical span at residues 2712 to 2732 (AMACYFGILLIVSATLCFGML). Topologically, residues 2733–2849 (RGFLMTLPQK…AAEPADIKDF (117 aa)) are cytoplasmic.

The protein belongs to the polycystin family. Heterodimer. Interacts with PKD2 to form a calcium channel. Interacts with PKD2L1; to form ciliary calcium channel. May interact with GNA12, GNAS, GNAI1 and GNAI2. As to expression, detected in testis and in fetal and adult heart.

Its subcellular location is the cell projection. The protein localises to the cilium membrane. In terms of biological role, component of a calcium-permeant ion channel formed by PKD1L2 and PKD1L1 in primary cilia, where it controls cilium calcium concentration, without affecting cytoplasmic calcium concentration, and regulates sonic hedgehog/SHH signaling and GLI2 transcription. The PKD1L1:PKD2L1 channel complex is mechanosensitive only at high pressures and is highly temperature sensitive. Also involved in left/right axis specification downstream of nodal flow by forming a complex with PKD2 in cilia to facilitate flow detection in left/right patterning. May function as a G-protein-coupled receptor. The chain is Polycystin-1-like protein 1 from Homo sapiens (Human).